Consider the following 553-residue polypeptide: Glutamine--tRNA ligase (553 aa).

Positions 34–44 (PEPNGYLHIGH) match the 'HIGH' region motif. ATP contacts are provided by residues 35–37 (EPN) and 41–47 (HIGHAKS). The L-glutamine site is built by D67 and Y212. ATP contacts are provided by residues T231, 261–262 (RL), and 269–271 (MSK). The 'KMSKS' region signature appears at 268–272 (IMSKR).

The protein belongs to the class-I aminoacyl-tRNA synthetase family. As to quaternary structure, monomer.

It is found in the cytoplasm. The enzyme catalyses tRNA(Gln) + L-glutamine + ATP = L-glutaminyl-tRNA(Gln) + AMP + diphosphate. The sequence is that of Glutamine--tRNA ligase from Tolumonas auensis (strain DSM 9187 / NBRC 110442 / TA 4).